A 520-amino-acid chain; its full sequence is Non-specific phospholipase C6 (520 aa).

The signal sequence occupies residues 1–31 (MKPSSASRFSLTFSHFLTLYCLLTQTHVAQG).

It belongs to the bacterial phospholipase C family. In terms of tissue distribution, expressed in roots, leaves, stems, flowers and siliques.

Its subcellular location is the secreted. The sequence is that of Non-specific phospholipase C6 (NPC6) from Arabidopsis thaliana (Mouse-ear cress).